Consider the following 280-residue polypeptide: Suppressor of disruption of TFIIS (280 aa).

Belongs to the SSM1 family.

Could be an enzyme that inactivates 6-azauracil by modifying it. The protein is Suppressor of disruption of TFIIS (SDT1) of Saccharomyces cerevisiae (strain ATCC 204508 / S288c) (Baker's yeast).